A 461-amino-acid chain; its full sequence is Adenine DNA glycosylase (461 aa).

Glutamate 69 acts as the Proton donor/acceptor in catalysis. [4Fe-4S] cluster is bound by residues cysteine 226, cysteine 233, cysteine 236, and cysteine 242. The 142-residue stretch at 296–437 (QREERALVVI…RAALEIKKRK (142 aa)) folds into the Nudix hydrolase domain. A Nudix box motif is present at residues 340–366 (FGQESWPKDMDAEFQKSIAQWISNDSR).

It belongs to the Nth/MutY family. In terms of assembly, monomer. It depends on [4Fe-4S] cluster as a cofactor.

The catalysed reaction is Hydrolyzes free adenine bases from 7,8-dihydro-8-oxoguanine:adenine mismatched double-stranded DNA, leaving an apurinic site.. Adenine glycosylase active on G-A mispairs. Has glycosylase and nicking activities and is active at A/G and A/GO sites. In Schizosaccharomyces pombe (strain 972 / ATCC 24843) (Fission yeast), this protein is Adenine DNA glycosylase (myh1).